Consider the following 411-residue polypeptide: MSPARLRPRLHFCLVLLLLLVVPAAWGCGPGRVVGSRRRPPRKLVPLAYKQFSPNVPEKTLGASGRYEGKIARSSERFKELTPNYNPDIIFKDEENTGADRLMTQRCKDRLNSLAISVMNQWPGVKLRVTEGWDEDGHHSEESLHYEGRAVDITTSDRDRNKYGLLARLAVEAGFDWVYYESKAHVHCSVKSEHSAAAKTGGCFPAGAQVRLESGARVALSAVRPGDRVLAMGEDGSPTFSDVLIFLDREPHRLRAFQVIETQDPPRRLALTPAHLLFTADNHTEPAARFRATFASHVQPGQYVLVAGVPGLQPARVAAVSTHVALGAYAPLTKHGTLVVEDVVASCFAAVADHHLAQLAFWPLRLFHSLAWGSWTPGEGVHWYPQLLYRLGRLLLEEGSFHPLGMSGAGS.

The first 27 residues, Met1–Gly27, serve as a signal peptide directing secretion. Cys28 is lipidated: N-palmitoyl cysteine. Ca(2+) contacts are provided by Glu94, Glu95, Asp100, Thr130, Glu131, Asp134, and Asp136. His145, Asp152, and His187 together coordinate Zn(2+). A lipid anchor (Cholesterol glycine ester) is attached at Gly202. Asn282 carries N-linked (GlcNAc...) asparagine glycosylation.

This sequence belongs to the hedgehog family. In terms of assembly, multimer. Interacts with BOC and CDON. Interacts with PTCH1. Interacts with glypican GPC3. In terms of processing, cholesterylation is required for N-product targeting to lipid rafts and multimerization. The C-terminal domain displays an autoproteolysis activity and a cholesterol transferase activity. Both activities result in the cleavage of the full-length protein and covalent attachment of a cholesterol moiety to the C-terminal of the newly generated N-product. The N-product is the active species in both local and long-range signaling, whereas the C-product is degraded in the endoplasmic reticulum. Post-translationally, N-palmitoylation by HHAT of N-product is required for indian hedgehog protein N-product multimerization and full activity. In terms of tissue distribution, expressed in embryonic lung, and in adult kidney and liver.

It localises to the cell membrane. The protein resides in the endoplasmic reticulum membrane. It is found in the golgi apparatus membrane. The protein localises to the secreted. The catalysed reaction is glycyl-L-cysteinyl-[protein] + cholesterol + H(+) = [protein]-C-terminal glycyl cholesterol ester + N-terminal L-cysteinyl-[protein]. Plays a role in embryonic morphogenesis; it is involved in the regulation of endochondral skeleton formation, and the development of retinal pigment epithelium (RPE), photoreceptors and periocular tissues. Its function is as follows. The C-terminal part of the indian hedgehog protein precursor displays an autoproteolysis and a cholesterol transferase activity. Both activities result in the cleavage of the full-length protein into two parts followed by the covalent attachment of a cholesterol moiety to the C-terminal of the newly generated N-product. Both activities occur in the endoplasmic reticulum. Plays a role in hedgehog paracrine signaling. Associated with the very-low-density lipoprotein (VLDL) particles to function as a circulating morphogen for endothelial cell integrity maintenance. In terms of biological role, the dually lipidated indian hedgehog protein N-product is a morphogen which is essential for a variety of patterning events during development. Binds to the patched (PTCH1) receptor, which functions in association with smoothened (SMO), to activate the transcription of target genes. Plays a role in morphogenesis of the skeleton by coordinating growth and differentiation of the endochondral skeleton. Positively regulates PTHLH expression during endochondral bone formation preventing chondrocyte hypertrophy. In contrast, participates in normal chondrocyte proliferation in a PTHLH-independent pathway. In Homo sapiens (Human), this protein is Indian hedgehog protein.